The following is a 209-amino-acid chain: Orotate phosphoribosyltransferase (209 aa).

5-phospho-alpha-D-ribose 1-diphosphate is bound by residues Arg-96, Lys-100, His-102, and Glu-122–Ser-130. An orotate-binding site is contributed by Ser-126.

It belongs to the purine/pyrimidine phosphoribosyltransferase family. PyrE subfamily. Homodimer. It depends on Mg(2+) as a cofactor.

It catalyses the reaction orotidine 5'-phosphate + diphosphate = orotate + 5-phospho-alpha-D-ribose 1-diphosphate. Its pathway is pyrimidine metabolism; UMP biosynthesis via de novo pathway; UMP from orotate: step 1/2. In terms of biological role, catalyzes the transfer of a ribosyl phosphate group from 5-phosphoribose 1-diphosphate to orotate, leading to the formation of orotidine monophosphate (OMP). This Lactococcus lactis subsp. lactis (strain IL1403) (Streptococcus lactis) protein is Orotate phosphoribosyltransferase.